A 100-amino-acid polypeptide reads, in one-letter code: MVKRTHGYRYKSRKLLSKKPRERGVPGLSRLLYEYKPGDKVVIDVDPTFVSTAPHRRYQGKVGVVIGTRGRAYVIETYIGDKKKIIVTTPEHLKPFQGGS.

It belongs to the eukaryotic ribosomal protein eL21 family.

The protein is Large ribosomal subunit protein eL21 of Pyrobaculum arsenaticum (strain DSM 13514 / JCM 11321 / PZ6).